Reading from the N-terminus, the 489-residue chain is Cysteine--tRNA ligase (489 aa).

Zn(2+) is bound at residue Cys29. Positions Ile31 to His41 match the 'HIGH' region motif. 3 residues coordinate Zn(2+): Cys209, His234, and Glu238. The 'KMSKS' region signature appears at Lys266–Ser270. Lys269 contributes to the ATP binding site.

Belongs to the class-I aminoacyl-tRNA synthetase family. In terms of assembly, monomer. Zn(2+) is required as a cofactor.

It localises to the cytoplasm. The catalysed reaction is tRNA(Cys) + L-cysteine + ATP = L-cysteinyl-tRNA(Cys) + AMP + diphosphate. The protein is Cysteine--tRNA ligase of Desulfotalea psychrophila (strain LSv54 / DSM 12343).